Here is a 222-residue protein sequence, read N- to C-terminus: MTRISREMMKELLSVYFIMGSNNTKADPVTVVQKALKGGATLYQFREKGGDALTGEARIKFAEKAQAACREAGVPFIVNDDVELALNLKADGIHIGQEDANAKEVRAAIGDMILGVSAHTMSEVKQAEEDGADYVGLGPIYPTETKKDTRAVQGVSLIEAVRRQGISIPIVGIGGITIDNAAPVIQAGADGVSMISAISQAEDPESAARKFREEIQTYKTGR.

4-amino-2-methyl-5-(diphosphooxymethyl)pyrimidine is bound by residues 44 to 48 (QFREK) and Asn-79. Positions 80 and 99 each coordinate Mg(2+). A 4-amino-2-methyl-5-(diphosphooxymethyl)pyrimidine-binding site is contributed by Ser-117. 2-[(2R,5Z)-2-carboxy-4-methylthiazol-5(2H)-ylidene]ethyl phosphate is bound at residue 143-145 (TET). Lys-146 provides a ligand contact to 4-amino-2-methyl-5-(diphosphooxymethyl)pyrimidine. Residues Gly-175 and 195 to 196 (IS) contribute to the 2-[(2R,5Z)-2-carboxy-4-methylthiazol-5(2H)-ylidene]ethyl phosphate site.

Belongs to the thiamine-phosphate synthase family. Monomer. Requires Mg(2+) as cofactor.

The catalysed reaction is 2-[(2R,5Z)-2-carboxy-4-methylthiazol-5(2H)-ylidene]ethyl phosphate + 4-amino-2-methyl-5-(diphosphooxymethyl)pyrimidine + 2 H(+) = thiamine phosphate + CO2 + diphosphate. It carries out the reaction 2-(2-carboxy-4-methylthiazol-5-yl)ethyl phosphate + 4-amino-2-methyl-5-(diphosphooxymethyl)pyrimidine + 2 H(+) = thiamine phosphate + CO2 + diphosphate. It catalyses the reaction 4-methyl-5-(2-phosphooxyethyl)-thiazole + 4-amino-2-methyl-5-(diphosphooxymethyl)pyrimidine + H(+) = thiamine phosphate + diphosphate. It functions in the pathway cofactor biosynthesis; thiamine diphosphate biosynthesis; thiamine phosphate from 4-amino-2-methyl-5-diphosphomethylpyrimidine and 4-methyl-5-(2-phosphoethyl)-thiazole: step 1/1. Condenses 4-methyl-5-(beta-hydroxyethyl)thiazole monophosphate (THZ-P) and 2-methyl-4-amino-5-hydroxymethyl pyrimidine pyrophosphate (HMP-PP) to form thiamine monophosphate (TMP). Is also able to use the 2-methoxy analog MeO-HMP-PP, as substrate in vitro, but not the 2-trifluoromethyl analog CF(3)-HMP-PP. This chain is Thiamine-phosphate synthase (thiE), found in Bacillus subtilis (strain 168).